A 306-amino-acid polypeptide reads, in one-letter code: Porphobilinogen deaminase (306 aa).

Residue cysteine 240 is modified to S-(dipyrrolylmethanemethyl)cysteine.

It belongs to the HMBS family. In terms of assembly, monomer. Requires dipyrromethane as cofactor.

It carries out the reaction 4 porphobilinogen + H2O = hydroxymethylbilane + 4 NH4(+). It participates in porphyrin-containing compound metabolism; protoporphyrin-IX biosynthesis; coproporphyrinogen-III from 5-aminolevulinate: step 2/4. Tetrapolymerization of the monopyrrole PBG into the hydroxymethylbilane pre-uroporphyrinogen in several discrete steps. The protein is Porphobilinogen deaminase of Syntrophomonas wolfei subsp. wolfei (strain DSM 2245B / Goettingen).